The primary structure comprises 206 residues: Small ribosomal subunit protein uS4 (206 aa).

The S4 RNA-binding domain maps to 94–157 (RRLDNVVYRL…RSRTYFKNLV (64 aa)).

It belongs to the universal ribosomal protein uS4 family. As to quaternary structure, part of the 30S ribosomal subunit. Contacts protein S5. The interaction surface between S4 and S5 is involved in control of translational fidelity.

In terms of biological role, one of the primary rRNA binding proteins, it binds directly to 16S rRNA where it nucleates assembly of the body of the 30S subunit. Functionally, with S5 and S12 plays an important role in translational accuracy. This Chloroflexus aurantiacus (strain ATCC 29364 / DSM 637 / Y-400-fl) protein is Small ribosomal subunit protein uS4.